Reading from the N-terminus, the 289-residue chain is Acetyl-coenzyme A carboxylase carboxyl transferase subunit beta (289 aa).

The CoA carboxyltransferase N-terminal domain maps to 23–289; sequence HWIKCPSCSA…YDENPCLLHL (267 aa). 4 residues coordinate Zn(2+): Cys27, Cys30, Cys46, and Cys49. The segment at 27–49 adopts a C4-type zinc-finger fold; it reads CPSCSALMYYKEVIAQHHVCPKC.

This sequence belongs to the AccD/PCCB family. Acetyl-CoA carboxylase is a heterohexamer composed of biotin carboxyl carrier protein (AccB), biotin carboxylase (AccC) and two subunits each of ACCase subunit alpha (AccA) and ACCase subunit beta (AccD). The cofactor is Zn(2+).

Its subcellular location is the cytoplasm. The catalysed reaction is N(6)-carboxybiotinyl-L-lysyl-[protein] + acetyl-CoA = N(6)-biotinyl-L-lysyl-[protein] + malonyl-CoA. Its pathway is lipid metabolism; malonyl-CoA biosynthesis; malonyl-CoA from acetyl-CoA: step 1/1. Its function is as follows. Component of the acetyl coenzyme A carboxylase (ACC) complex. Biotin carboxylase (BC) catalyzes the carboxylation of biotin on its carrier protein (BCCP) and then the CO(2) group is transferred by the transcarboxylase to acetyl-CoA to form malonyl-CoA. The sequence is that of Acetyl-coenzyme A carboxylase carboxyl transferase subunit beta from Wolinella succinogenes (strain ATCC 29543 / DSM 1740 / CCUG 13145 / JCM 31913 / LMG 7466 / NCTC 11488 / FDC 602W) (Vibrio succinogenes).